Consider the following 259-residue polypeptide: Activator of lactoyl-CoA dehydratase (259 aa).

C125 and C164 together coordinate [4Fe-4S] cluster.

In terms of assembly, homodimer. It depends on [4Fe-4S] cluster as a cofactor.

In terms of biological role, required for the activation of lactoyl-CoA dehydratase. This protein is extremely sensitive towards oxygen. In Anaerotignum propionicum (Clostridium propionicum), this protein is Activator of lactoyl-CoA dehydratase (lcdC).